The chain runs to 311 residues: Aspartate carbamoyltransferase catalytic subunit (311 aa).

Residues R55 and T56 each coordinate carbamoyl phosphate. Residue K85 participates in L-aspartate binding. Carbamoyl phosphate-binding residues include R106, H135, and Q138. Residues R168 and R230 each coordinate L-aspartate. Residues L268 and P269 each contribute to the carbamoyl phosphate site.

The protein belongs to the aspartate/ornithine carbamoyltransferase superfamily. ATCase family. Heterododecamer (2C3:3R2) of six catalytic PyrB chains organized as two trimers (C3), and six regulatory PyrI chains organized as three dimers (R2).

The catalysed reaction is carbamoyl phosphate + L-aspartate = N-carbamoyl-L-aspartate + phosphate + H(+). The protein operates within pyrimidine metabolism; UMP biosynthesis via de novo pathway; (S)-dihydroorotate from bicarbonate: step 2/3. Functionally, catalyzes the condensation of carbamoyl phosphate and aspartate to form carbamoyl aspartate and inorganic phosphate, the committed step in the de novo pyrimidine nucleotide biosynthesis pathway. This chain is Aspartate carbamoyltransferase catalytic subunit, found in Buchnera aphidicola subsp. Schizaphis graminum (strain Sg).